A 191-amino-acid polypeptide reads, in one-letter code: Cathelicidin-related peptide Oh-Cath (191 aa).

The N-terminal stretch at 1-22 (MEGFFWKTLLVVGALAIGGTSS) is a signal peptide. Positions 23-161 (LPHKPLTYEE…DQPRRVKRFK (139 aa)) are excised as a propeptide. 2 disulfide bridges follow: cysteine 81-cysteine 92 and cysteine 103-cysteine 120. The segment covering 125–151 (EEEEQKQEEGNEEEKEVEKEEKEEDEK) has biased composition (acidic residues). Residues 125–154 (EEEEQKQEEGNEEEKEVEKEEKEEDEKDQP) are disordered.

The protein belongs to the cathelicidin family. In terms of tissue distribution, expressed by the venom gland.

It is found in the secreted. Its subcellular location is the target cell membrane. Its function is as follows. Potent antimicrobial peptide against Gram-negative (MIC=0.25 ug/ml against E.coli ATCC 25922, MIC=0.5 ug/ml against P.aeruginosa) and Gram-positive bacteria (MIC=64 ug/ml against E.faecalis, MIC=64 ug/ml against S.aureus). Adopts an amphipathic alpha helical conformation, that may allow to partition into the target membrane. Low hemolytic activities have been observed on mammalian cells. This Ophiophagus hannah (King cobra) protein is Cathelicidin-related peptide Oh-Cath.